The following is a 462-amino-acid chain: Glycerol-3-phosphate dehydrogenase [NAD(+)] GPDHC1, cytosolic (462 aa).

NAD(+) contacts are provided by residues 48–53, K196, and A235; that span reads GAGAWG. K196 serves as a coordination point for substrate. K285 (proton acceptor) is an active-site residue. R347 and Q375 together coordinate NAD(+). 347–348 serves as a coordination point for substrate; that stretch reads RN.

Belongs to the NAD-dependent glycerol-3-phosphate dehydrogenase family. In terms of tissue distribution, expressed in roots, leaves, flowers and siliques.

It is found in the cytoplasm. Its subcellular location is the cytosol. It carries out the reaction sn-glycerol 3-phosphate + NAD(+) = dihydroxyacetone phosphate + NADH + H(+). In terms of biological role, involved in cell redox homeostasis. Required for maintaining a steady state cellular NADH/NAD(+) ratio through a mitochondrial glycerol-3-phosphate redox shuttle. May function with the mitochondrial FAD-dependent glycerol-3-phosphate dehydrogenase SDP6 to shuttle reducing equivalents into the mitochondria for respiration. In Arabidopsis thaliana (Mouse-ear cress), this protein is Glycerol-3-phosphate dehydrogenase [NAD(+)] GPDHC1, cytosolic (GPDHC1).